Here is a 306-residue protein sequence, read N- to C-terminus: MNGILIVDKPQGMTSHAVVGRIRRLFGLRKVGHAGTLDPLATGVLVVALGQATRILQFLMQENKVYRASLVLGKTTDTQDSEGQIVATSDPGHIDAQSVADVCHSMVGSYDQMPPMYSALKKDGVPLYKLARQGVEVSRKPRRITIFDLQLLAVEPPNITFDVHCSKGTYVRTICHDIGVKLGCGAHLTALRRLRSAPFDVKEAVTLEAIELMAPEDRPELLLSIAEALREYPSLNVCPEGIKRLGYGIPPTADMIADTIDFEEGTQVLLVGPGGALAMATYVPSRARESRGDFELLRVFNDGGSS.

The active-site Nucleophile is the D38.

It belongs to the pseudouridine synthase TruB family. Type 1 subfamily.

The enzyme catalyses uridine(55) in tRNA = pseudouridine(55) in tRNA. In terms of biological role, responsible for synthesis of pseudouridine from uracil-55 in the psi GC loop of transfer RNAs. This is tRNA pseudouridine synthase B from Syntrophotalea carbinolica (strain DSM 2380 / NBRC 103641 / GraBd1) (Pelobacter carbinolicus).